Reading from the N-terminus, the 352-residue chain is Ion-translocating oxidoreductase complex subunit D (352 aa).

A run of 4 helical transmembrane segments spans residues 20 to 40 (IMLL…WFFG), 42 to 62 (GTLF…AIVL), 69 to 91 (VASH…SIPP), and 123 to 143 (PAMI…TSWL). An FMN phosphoryl threonine modification is found at threonine 187. The next 5 helical transmembrane spans lie at 215–235 (LAGV…VFLL), 242–262 (WHIP…GWLF), 267–287 (LASP…FFIL), 301–321 (LIFG…GGYP), and 322–342 (DGVA…DYYT).

Belongs to the NqrB/RnfD family. As to quaternary structure, the complex is composed of six subunits: RsxA, RsxB, RsxC, RsxD, RsxE and RsxG. FMN is required as a cofactor.

Its subcellular location is the cell inner membrane. Its function is as follows. Part of a membrane-bound complex that couples electron transfer with translocation of ions across the membrane. Required to maintain the reduced state of SoxR. The chain is Ion-translocating oxidoreductase complex subunit D from Salmonella dublin (strain CT_02021853).